The primary structure comprises 609 residues: MWRLPGARAALRVIRTAVEKLSRAEAGSQTAAGAMERAVVRCVPSEPKLSLSFALADGSHKNMQRDQSEPLGRVLSRIATNALKGHAKAAAAKKSRKSRPNASGGAACSGPGPEPAVFCEPVVKLYYREEAVAEDVLNVDAWQDGAVLQIGDVKYKVERNPPAFTELQLPRYIMAGFPVCPKLSLEFGDPASSLFRWYKEAKPGAAEPEVGVPSSLSPSSPSSSWTETDVEERVYTPSNADIGLRLKLHCTPGDGQRFGHSRELESVCVVEAGPGTCTFDHRHLYTKKVTEDALIRTVSYNILADTYAQTEFSRTVLYPYCAPYALELDYRQNLIQKELTGYNADVICLQEVDRAVFSDSLVPALEAFGLEGVFRIKQHEGLATFYRKSKFSLLSQHDISFYEALESDPLHKELLEKLVLYPSAQEKVLQRSSVLQVSVLQSTKDSSKRICVANTHLYWHPKGGYIRLIQMAVALAHIRHVSCDLYPGIPVIFCGDFNSTPSTGMYHFVINGSIPEDHEDWASNGEEERCNMSLTHFFKLKSACGEPAYTNYVGGFHGCLDYIFIDLNALEVEQVIPLPSHEEVTTHQALPSVSHPSDHIALVCDLKWK.

The N-terminal 42 residues, 1–42 (MWRLPGARAALRVIRTAVEKLSRAEAGSQTAAGAMERAVVRC), are a transit peptide targeting the mitochondrion. Residues 89–99 (AAAAKKSRKSR) show a composition bias toward basic residues. Disordered stretches follow at residues 89 to 111 (AAAAKKSRKSRPNASGGAACSGP) and 206 to 230 (AEPEVGVPSSLSPSSPSSSWTETDV). Low complexity-rich tracts occupy residues 100–111 (PNASGGAACSGP) and 213–224 (PSSLSPSSPSSS). Phosphoserine is present on S217. Positions 351, 496, and 498 each coordinate Mg(2+). D496 functions as the Proton donor/acceptor in the catalytic mechanism.

It belongs to the CCR4/nocturin family. Mg(2+) is required as a cofactor. As to expression, ubiquitous.

It is found in the mitochondrion matrix. The catalysed reaction is Exonucleolytic cleavage of poly(A) to 5'-AMP.. In terms of biological role, enzyme that cleaves 2',5'-phosphodiester bond linking adenosines of the 5'-triphosphorylated oligoadenylates, triphosphorylated oligoadenylates referred as 2-5A modulates the 2-5A system. Degrades triphosphorylated 2-5A to produce AMP and ATP. Also cleaves 3',5'-phosphodiester bond of oligoadenylates. Plays a role as a negative regulator of the 2-5A system that is one of the major pathways for antiviral and antitumor functions induced by interferons (IFNs). Suppression of this enzyme increases cellular 2-5A levels and decreases viral replication in cultured small-airway epithelial cells and Hela cells. This Homo sapiens (Human) protein is 2',5'-phosphodiesterase 12 (PDE12).